Here is a 226-residue protein sequence, read N- to C-terminus: ATP synthase F(0) complex subunit a (226 aa).

A run of 6 helical transmembrane segments spans residues 6 to 26 (FASF…IIMF), 68 to 88 (WTLM…LGLL), 97 to 117 (QLSM…ITGF), 138 to 158 (IPML…ALAV), 164 to 184 (ITAG…LMNI), and 189 to 209 (ATIT…VALI).

The protein belongs to the ATPase A chain family. Component of the ATP synthase complex composed at least of ATP5F1A/subunit alpha, ATP5F1B/subunit beta, ATP5MC1/subunit c (homooctomer), MT-ATP6/subunit a, MT-ATP8/subunit 8, ATP5ME/subunit e, ATP5MF/subunit f, ATP5MG/subunit g, ATP5MK/subunit k, ATP5MJ/subunit j, ATP5F1C/subunit gamma, ATP5F1D/subunit delta, ATP5F1E/subunit epsilon, ATP5PF/subunit F6, ATP5PB/subunit b, ATP5PD/subunit d, ATP5PO/subunit OSCP. ATP synthase complex consists of a soluble F(1) head domain (subunits alpha(3) and beta(3)) - the catalytic core - and a membrane F(0) domain - the membrane proton channel (subunits c, a, 8, e, f, g, k and j). These two domains are linked by a central stalk (subunits gamma, delta, and epsilon) rotating inside the F1 region and a stationary peripheral stalk (subunits F6, b, d, and OSCP). Interacts with DNAJC30; interaction is direct.

It localises to the mitochondrion inner membrane. The enzyme catalyses H(+)(in) = H(+)(out). Subunit a, of the mitochondrial membrane ATP synthase complex (F(1)F(0) ATP synthase or Complex V) that produces ATP from ADP in the presence of a proton gradient across the membrane which is generated by electron transport complexes of the respiratory chain. ATP synthase complex consist of a soluble F(1) head domain - the catalytic core - and a membrane F(1) domain - the membrane proton channel. These two domains are linked by a central stalk rotating inside the F(1) region and a stationary peripheral stalk. During catalysis, ATP synthesis in the catalytic domain of F(1) is coupled via a rotary mechanism of the central stalk subunits to proton translocation. With the subunit c (ATP5MC1), forms the proton-conducting channel in the F(0) domain, that contains two crucial half-channels (inlet and outlet) that facilitate proton movement from the mitochondrial intermembrane space (IMS) into the matrix. Protons are taken up via the inlet half-channel and released through the outlet half-channel, following a Grotthuss mechanism. The chain is ATP synthase F(0) complex subunit a from Mus musculus (Mouse).